The primary structure comprises 154 residues: Small ribosomal subunit protein uS9 (154 aa).

Disordered stretches follow at residues methionine 1 to glycine 33 and proline 115 to arginine 154. Positions lysine 135–arginine 154 are enriched in basic residues.

This sequence belongs to the universal ribosomal protein uS9 family.

The polypeptide is Small ribosomal subunit protein uS9 (Tropheryma whipplei (strain TW08/27) (Whipple's bacillus)).